The sequence spans 225 residues: Urease accessory protein UreG (225 aa).

The tract at residues 1 to 21 (MHLDHHHESAAAVSADARRPD) is disordered. 33-40 (GPVGSGKT) is a binding site for GTP.

Belongs to the SIMIBI class G3E GTPase family. UreG subfamily. Homodimer. UreD, UreF and UreG form a complex that acts as a GTP-hydrolysis-dependent molecular chaperone, activating the urease apoprotein by helping to assemble the nickel containing metallocenter of UreC. The UreE protein probably delivers the nickel.

The protein resides in the cytoplasm. In terms of biological role, facilitates the functional incorporation of the urease nickel metallocenter. This process requires GTP hydrolysis, probably effectuated by UreG. The protein is Urease accessory protein UreG of Streptomyces coelicolor (strain ATCC BAA-471 / A3(2) / M145).